A 204-amino-acid polypeptide reads, in one-letter code: Ribosomal RNA small subunit methyltransferase G (204 aa).

Positions 73, 78, and 139 each coordinate S-adenosyl-L-methionine.

This sequence belongs to the methyltransferase superfamily. RNA methyltransferase RsmG family.

It localises to the cytoplasm. It carries out the reaction guanosine(527) in 16S rRNA + S-adenosyl-L-methionine = N(7)-methylguanosine(527) in 16S rRNA + S-adenosyl-L-homocysteine. Functionally, specifically methylates the N7 position of guanine in position 527 of 16S rRNA. The polypeptide is Ribosomal RNA small subunit methyltransferase G (Coxiella burnetii (strain RSA 331 / Henzerling II)).